The sequence spans 514 residues: MAKPIMIQGTMSNAGKSLLTAGLCRIFTQDGYRVAPFKSQNMALNSYITTDGSEMGRAQVVQAEAAGKAPDVRMNPILLKPTSEKGSQVILGGKPIGNMTTTEYYAHKHNLLPHIKRAYESLSQENDIIVIEGAGSPAEINLKRDDFVNMGLAKMLKAPVLIAGDIDRGGVFASLYGTVMLFDEDERKHVKGTIINKFRGDVEILKPGLDMLCDLIHVPVVGVVPYLHVDIDDEDSLSERFSKKGPLGLIDIAVIKLPRISNFTDFNALEHIECASVRYVSGTNELGNPDLIIIPGSKNTMGDLKWMRENGLEVCIKKHAAKNKPVFGICGGYQMLCENLGDPYGVEHGGEMKGMGLLKSTTVFEKEKTRTRVMGTFSKVGGIFNGLSGKTFEGYEIHMGYTASEEGNEGDSSLSNLAEISGNEKPDGMQKGNVYGTYVHGVFDNDEILSEIAAALMKEKGLEYEKHTFFNLKEYKEKQYNLLADALRECLDMEYIYKVIEEGIENGNNETNGY.

A GATase cobBQ-type domain is found at 249–448; sequence LIDIAVIKLP…VHGVFDNDEI (200 aa). Cys-330 serves as the catalytic Nucleophile. His-440 is a catalytic residue.

The protein belongs to the CobB/CobQ family. CobQ subfamily.

It functions in the pathway cofactor biosynthesis; adenosylcobalamin biosynthesis. Functionally, catalyzes amidations at positions B, D, E, and G on adenosylcobyrinic A,C-diamide. NH(2) groups are provided by glutamine, and one molecule of ATP is hydrogenolyzed for each amidation. The sequence is that of Cobyric acid synthase from Ruminiclostridium cellulolyticum (strain ATCC 35319 / DSM 5812 / JCM 6584 / H10) (Clostridium cellulolyticum).